Consider the following 258-residue polypeptide: Phosphate import ATP-binding protein PstB 1 (258 aa).

The ABC transporter domain maps to 5–247 (LDLTDVNIYY…EKIFSNPNQK (243 aa)). 37-44 (GPSGCGKT) is an ATP binding site.

The protein belongs to the ABC transporter superfamily. Phosphate importer (TC 3.A.1.7) family. As to quaternary structure, the complex is composed of two ATP-binding proteins (PstB), two transmembrane proteins (PstC and PstA) and a solute-binding protein (PstS).

It localises to the cell membrane. The catalysed reaction is phosphate(out) + ATP + H2O = ADP + 2 phosphate(in) + H(+). Part of the ABC transporter complex PstSACB involved in phosphate import. Responsible for energy coupling to the transport system. This chain is Phosphate import ATP-binding protein PstB 1, found in Mycobacterium bovis (strain ATCC BAA-935 / AF2122/97).